Consider the following 442-residue polypeptide: 4-hydroxyphenylpyruvate dioxygenase (442 aa).

VOC domains follow at residues 45–200 (RFHH…GFEA) and 216–376 (RLDH…IFTK). 3 residues coordinate Fe cation: His219, His301, and Glu387.

Belongs to the 4HPPD family. Requires Fe cation as cofactor.

Its subcellular location is the cytoplasm. The catalysed reaction is 3-(4-hydroxyphenyl)pyruvate + O2 = homogentisate + CO2. It participates in amino-acid degradation; L-phenylalanine degradation; acetoacetate and fumarate from L-phenylalanine: step 3/6. Its pathway is cofactor biosynthesis; prenylquinone biosynthesis. In Daucus carota (Wild carrot), this protein is 4-hydroxyphenylpyruvate dioxygenase.